We begin with the raw amino-acid sequence, 315 residues long: Porphobilinogen deaminase (315 aa).

Cysteine 241 carries the S-(dipyrrolylmethanemethyl)cysteine modification.

It belongs to the HMBS family. In terms of assembly, monomer. Dipyrromethane serves as cofactor.

The enzyme catalyses 4 porphobilinogen + H2O = hydroxymethylbilane + 4 NH4(+). It participates in porphyrin-containing compound metabolism; protoporphyrin-IX biosynthesis; coproporphyrinogen-III from 5-aminolevulinate: step 2/4. In terms of biological role, tetrapolymerization of the monopyrrole PBG into the hydroxymethylbilane pre-uroporphyrinogen in several discrete steps. The chain is Porphobilinogen deaminase from Nitratidesulfovibrio vulgaris (strain ATCC 29579 / DSM 644 / CCUG 34227 / NCIMB 8303 / VKM B-1760 / Hildenborough) (Desulfovibrio vulgaris).